Consider the following 352-residue polypeptide: UDP-N-acetylglucosamine--N-acetylmuramyl-(pentapeptide) pyrophosphoryl-undecaprenol N-acetylglucosamine transferase (352 aa).

Ser195 and Gln287 together coordinate UDP-N-acetyl-alpha-D-glucosamine.

This sequence belongs to the glycosyltransferase 28 family. MurG subfamily.

Its subcellular location is the cell membrane. It carries out the reaction Mur2Ac(oyl-L-Ala-gamma-D-Glu-L-Lys-D-Ala-D-Ala)-di-trans,octa-cis-undecaprenyl diphosphate + UDP-N-acetyl-alpha-D-glucosamine = beta-D-GlcNAc-(1-&gt;4)-Mur2Ac(oyl-L-Ala-gamma-D-Glu-L-Lys-D-Ala-D-Ala)-di-trans,octa-cis-undecaprenyl diphosphate + UDP + H(+). It participates in cell wall biogenesis; peptidoglycan biosynthesis. In terms of biological role, cell wall formation. Catalyzes the transfer of a GlcNAc subunit on undecaprenyl-pyrophosphoryl-MurNAc-pentapeptide (lipid intermediate I) to form undecaprenyl-pyrophosphoryl-MurNAc-(pentapeptide)GlcNAc (lipid intermediate II). The protein is UDP-N-acetylglucosamine--N-acetylmuramyl-(pentapeptide) pyrophosphoryl-undecaprenol N-acetylglucosamine transferase of Streptococcus pneumoniae serotype 4 (strain ATCC BAA-334 / TIGR4).